A 129-amino-acid polypeptide reads, in one-letter code: Small ribosomal subunit protein uS11 (129 aa).

The protein belongs to the universal ribosomal protein uS11 family. As to quaternary structure, part of the 30S ribosomal subunit. Interacts with proteins S7 and S18. Binds to IF-3.

Located on the platform of the 30S subunit, it bridges several disparate RNA helices of the 16S rRNA. Forms part of the Shine-Dalgarno cleft in the 70S ribosome. This chain is Small ribosomal subunit protein uS11, found in Lactobacillus gasseri (strain ATCC 33323 / DSM 20243 / BCRC 14619 / CIP 102991 / JCM 1131 / KCTC 3163 / NCIMB 11718 / NCTC 13722 / AM63).